Here is a 548-residue protein sequence, read N- to C-terminus: WEB family protein At1g12150 (548 aa).

Residues 71–544 (KEFMKIKQKL…ELQRWRQQEN (474 aa)) adopt a coiled-coil conformation. Residues 430–448 (VREEMKMISQKQESKKQDE) show a composition bias toward basic and acidic residues. A disordered region spans residues 430–455 (VREEMKMISQKQESKKQDEESSGSKI).

The protein belongs to the WEB family.

The protein is WEB family protein At1g12150 of Arabidopsis thaliana (Mouse-ear cress).